Reading from the N-terminus, the 504-residue chain is L-carnitine/gamma-butyrobetaine antiporter (504 aa).

The next 12 membrane-spanning stretches (helical) occupy residues 10–30 (IEPKVFFPPLIIVGILCWLTV), 51–71 (WGWAFEWYMVVMLFGWFWLVF), 92–112 (IFMMFASCTSAAVLFWGSIEI), 143–163 (GPLPWATYSFLSVAFAYFFFV), 195–215 (FYLVALIFAMGTSLGLATPLV), 231–251 (LDAIIITCWIILNAICVACGL), 263–283 (SYLSFLMLGWVFIVSGASFIM), 316–336 (WTVFYWAWWVIYAIQMSIFLA), 347–367 (LCFGMVLGLTASTWILWTVLG), 398–418 (WAALPLSTATMWGFFILCFIA), 446–466 (LLVRIGWSILVGIIGIVLLAL), and 475–495 (AIIAGGCPLFFVNIMVTLSFI).

It belongs to the BCCT transporter (TC 2.A.15) family. CaiT subfamily. In terms of assembly, homotrimer.

It is found in the cell inner membrane. The enzyme catalyses 4-(trimethylamino)butanoate(in) + (R)-carnitine(out) = 4-(trimethylamino)butanoate(out) + (R)-carnitine(in). The protein operates within amine and polyamine metabolism; carnitine metabolism. In terms of biological role, catalyzes the exchange of L-carnitine for gamma-butyrobetaine. The protein is L-carnitine/gamma-butyrobetaine antiporter of Escherichia coli (strain ATCC 8739 / DSM 1576 / NBRC 3972 / NCIMB 8545 / WDCM 00012 / Crooks).